A 956-amino-acid chain; its full sequence is RNA-silencing factor ers1 (956 aa).

The protein resides in the cytoplasm. Its subcellular location is the cytoskeleton. It localises to the microtubule organizing center. The protein localises to the spindle pole body. Functionally, involved in RNAi-dependent heterochromatin formation and centromeric silencing. Required for the conversion of centromeric pre-small interfering RNA transcripts into small interfering RNAs, histone H3 'Lys9' methylation, and the recruitment of the RITS complex to centromeric sequences. The sequence is that of RNA-silencing factor ers1 (ers1) from Schizosaccharomyces pombe (strain 972 / ATCC 24843) (Fission yeast).